The primary structure comprises 106 residues: MALDPSEQHLRHVEKDVLIPKIMREKARERCSEQVQDFTKCCKDSGVLMVVKCRKENSALKDCLTSYYKDPAFYEECKMEYLKEREEFRRTGIPTKKRLQKLPTSM.

Ala2 bears the N-acetylalanine mark. Residues 28 to 71 enclose the CHCH domain; the sequence is RERCSEQVQDFTKCCKDSGVLMVVKCRKENSALKDCLTSYYKDP. 2 consecutive short sequence motifs (cx9C motif) follow at residues 31 to 41 and 53 to 63; these read CSEQVQDFTKC and CRKENSALKDC. Intrachain disulfides connect Cys31/Cys63 and Cys41/Cys53.

The protein belongs to the CMC family. Component of the MITRAC (mitochondrial translation regulation assembly intermediate of cytochrome c oxidase complex) complex, the core components of this complex being COA3/MITRAC12 and COX14.

It localises to the mitochondrion. Component of the MITRAC (mitochondrial translation regulation assembly intermediate of cytochrome c oxidase complex) complex, that regulates cytochrome c oxidase assembly. The protein is COX assembly mitochondrial protein homolog (CMC1) of Bos taurus (Bovine).